A 183-amino-acid polypeptide reads, in one-letter code: MSKKIMATQKVIIASLNPAKITAVESAFTSAFPNGTFEFVGVNVPSEVADQPMSDSETHLGALNRVRNAKACRADGAFYVGLEAGIDGNVTFAWTVIESHTHRGESRSASLMLPPNVIAKLANANELGDVMDEVFGTENIKQKGGAISLLTQNQLTRSSVYHQALILALIPFTNPEHFPANLS.

D75 contributes to the Mg(2+) binding site. 75–76 (DG) lines the substrate pocket.

Belongs to the YjjX NTPase family. As to quaternary structure, homodimer. Requires Mg(2+) as cofactor. Mn(2+) serves as cofactor.

It catalyses the reaction XTP + H2O = XDP + phosphate + H(+). The catalysed reaction is ITP + H2O = IDP + phosphate + H(+). Functionally, phosphatase that hydrolyzes non-canonical purine nucleotides such as XTP and ITP to their respective diphosphate derivatives. Probably excludes non-canonical purines from DNA/RNA precursor pool, thus preventing their incorporation into DNA/RNA and avoiding chromosomal lesions. The polypeptide is Inosine/xanthosine triphosphatase (Vibrio vulnificus (strain CMCP6)).